The chain runs to 640 residues: ATP-dependent DNA helicase YoaA (640 aa).

In terms of domain architecture, Helicase ATP-binding spans 16–278; that stretch reads ELSQNIKGFR…KDMQQLGTTS (263 aa). ATP is bound at residue 51-58; it reads AGTGTGKT. Residue Cys114 participates in [4Fe-4S] cluster binding. A DEAH box motif is present at residues 125–128; the sequence is GVLG. The [4Fe-4S] cluster site is built by Cys174, Cys179, and Cys185. The DEAH box motif lies at 231 to 234; the sequence is DEAH. In terms of domain architecture, Helicase C-terminal spans 458-634; it reads SLGEILLPVI…SRTRDLNKVI (177 aa).

Belongs to the helicase family. DinG subfamily. Requires [4Fe-4S] cluster as cofactor.

It carries out the reaction Couples ATP hydrolysis with the unwinding of duplex DNA at the replication fork by translocating in the 5'-3' direction. This creates two antiparallel DNA single strands (ssDNA). The leading ssDNA polymer is the template for DNA polymerase III holoenzyme which synthesizes a continuous strand.. It catalyses the reaction ATP + H2O = ADP + phosphate + H(+). Probably a 5'-3' DNA helicase. The sequence is that of ATP-dependent DNA helicase YoaA from Haemophilus influenzae (strain ATCC 51907 / DSM 11121 / KW20 / Rd).